The chain runs to 527 residues: Catalase (527 aa).

An N-acetylalanine modification is found at Ala2. Ser9 carries the post-translational modification Phosphoserine. Catalysis depends on residues His75 and Asn148. Residues His194, Ser201, Arg203, and Asn213 each contribute to the NADP(+) site. Position 221 is an N6-succinyllysine (Lys221). Residue Lys233 is modified to N6-acetyllysine. Residues Lys237, Trp303, His305, and Lys306 each coordinate NADP(+). Lys306 is modified (N6-acetyllysine; alternate). Lys306 is modified (N6-succinyllysine; alternate). Tyr358 serves as a coordination point for heme. Phosphoserine occurs at positions 417 and 422. Residue Lys480 is modified to N6-acetyllysine; alternate. Lys480 is subject to N6-succinyllysine; alternate. Lys499 is subject to N6-acetyllysine. Thr511 is subject to Phosphothreonine. A phosphoserine mark is found at Ser515 and Ser517. The Microbody targeting signal; atypical signature appears at 524–527 (KANL).

Belongs to the catalase family. In terms of assembly, homotetramer. Interacts (via microbody targeting signal) with PEX5, monomeric form interacts with PEX5, leading to its translocation into peroxisomes. The cofactor is heme. NADP(+) serves as cofactor.

It is found in the peroxisome matrix. It carries out the reaction 2 H2O2 = O2 + 2 H2O. Its function is as follows. Catalyzes the degradation of hydrogen peroxide (H(2)O(2)) generated by peroxisomal oxidases to water and oxygen, thereby protecting cells from the toxic effects of hydrogen peroxide. Promotes growth of cells including T-cells, B-cells, myeloid leukemia cells, melanoma cells, mastocytoma cells and normal and transformed fibroblast cells. The protein is Catalase (CAT) of Homo sapiens (Human).